The primary structure comprises 438 residues: L-fucose-proton symporter (438 aa).

At 2–26 (GNTSIQTQSYRAVDKDAGQSRSYII) the chain is on the cytoplasmic side. The chain crosses the membrane as a helical span at residues 27 to 53 (PFALLCSLFFLWAVANNLNDILLPQFQ). At 54–61 (QAFTLTNF) the chain is on the periplasmic side. Residues 62–87 (QAGLIQSAFYFGYFIIPIPAGILMKK) form a helical membrane-spanning segment. Topologically, residues 88 to 90 (LSY) are cytoplasmic. The helical transmembrane segment at 91-113 (KAGIITGLFLYALGAALFWPAAE) threads the bilayer. Topologically, residues 114-117 (IMNY) are periplasmic. The helical transmembrane segment at 118 to 144 (TLFLVGLFIIAAGLGCLETAANPFVTV) threads the bilayer. At 145-150 (LGPESS) the chain is on the cytoplasmic side. Residues 151-178 (GHFRLNLAQTFNSFGAIIAVVFGQSLIL) form a helical membrane-spanning segment. The Periplasmic segment spans residues 179 to 193 (SNVPHQSQDVLDKMS). The helical transmembrane segment at 194–227 (PEQLSAYKHSLVLSVQTPYMIIVAIVLLVALLIM) threads the bilayer. Residues 228 to 257 (LTKFPALQSDNHSDAKQGSFSASLSRLARI) are Cytoplasmic-facing. A helical transmembrane segment spans residues 258–287 (RHWRWAVLAQFCYVGAQTACWSYLIRYAVE). At 288–293 (EIPGMT) the chain is on the periplasmic side. The helical transmembrane segment at 294-319 (AGFAANYLTGTMVCFFIGRFTGTWLI) threads the bilayer. The Cytoplasmic portion of the chain corresponds to 320 to 324 (SRFAP). Residues 325 to 343 (HKVLAAYALIAMALCLISA) form a helical membrane-spanning segment. The Periplasmic segment spans residues 344–347 (FAGG). The chain crosses the membrane as a helical span at residues 348–372 (HVGLIALTLCSAFMSIQYPTIFSLG). Over 373–379 (IKNLGQD) the chain is Cytoplasmic. A helical transmembrane segment spans residues 380–407 (TKYGSSFIVMTIIGGGIVTPVMGFVSDA). The Periplasmic segment spans residues 408 to 410 (AGN). A helical transmembrane segment spans residues 411 to 430 (IPTAELIPALCFAVIFIFAR). The Cytoplasmic portion of the chain corresponds to 431–438 (FRSQTATN).

Belongs to the major facilitator superfamily. FHS transporter (TC 2.A.1.7) family.

It localises to the cell inner membrane. It catalyses the reaction L-fucose(in) + H(+)(in) = L-fucose(out) + H(+)(out). It carries out the reaction D-arabinose(out) + H(+)(out) = D-arabinose(in) + H(+)(in). The enzyme catalyses L-galactose(out) + H(+)(out) = L-galactose(in) + H(+)(in). Functionally, mediates the uptake of L-fucose across the boundary membrane with the concomitant transport of protons into the cell (symport system). Can also transport L-galactose and D-arabinose, but at reduced rates compared with L-fucose. Is not able to transport L-rhamnose and L-arabinose. Binds D-arabinose with the highest affinity, followed by L-fucose, and then by L-galactose. The sequence is that of L-fucose-proton symporter (fucP) from Escherichia coli (strain K12).